Reading from the N-terminus, the 178-residue chain is Large ribosomal subunit protein uL6 (178 aa).

This sequence belongs to the universal ribosomal protein uL6 family. Part of the 50S ribosomal subunit.

Functionally, this protein binds to the 23S rRNA, and is important in its secondary structure. It is located near the subunit interface in the base of the L7/L12 stalk, and near the tRNA binding site of the peptidyltransferase center. The chain is Large ribosomal subunit protein uL6 from Campylobacter jejuni subsp. jejuni serotype O:2 (strain ATCC 700819 / NCTC 11168).